Consider the following 184-residue polypeptide: Glucosamine 6-phosphate N-acetyltransferase (184 aa).

The 146-residue stretch at 39-184 folds into the N-acetyltransferase domain; that stretch reads LVLRPLCTAD…ENYMCRRFLK (146 aa). Substrate-binding positions include T61, 108–111, and 120–122; these read KFIH and EDV. Residue 130–135 participates in acetyl-CoA binding; it reads GKQLGK. 151-152 contributes to the substrate binding site; that stretch reads YK. 165–167 contributes to the acetyl-CoA binding site; sequence YKK. Residues E175 and R181 each coordinate substrate.

The protein belongs to the acetyltransferase family. GNA1 subfamily. As to quaternary structure, homodimer. Ubiquitous. Shows a strong differential expression pattern in adult hematopoietic precursor cells.

The protein resides in the golgi apparatus membrane. Its subcellular location is the endosome membrane. The enzyme catalyses D-glucosamine 6-phosphate + acetyl-CoA = N-acetyl-D-glucosamine 6-phosphate + CoA + H(+). It functions in the pathway nucleotide-sugar biosynthesis; UDP-N-acetyl-alpha-D-glucosamine biosynthesis; N-acetyl-alpha-D-glucosamine 1-phosphate from alpha-D-glucosamine 6-phosphate (route I): step 1/2. This chain is Glucosamine 6-phosphate N-acetyltransferase (Gnpnat1), found in Mus musculus (Mouse).